A 302-amino-acid polypeptide reads, in one-letter code: Glycine--tRNA ligase alpha subunit (302 aa).

The protein belongs to the class-II aminoacyl-tRNA synthetase family. In terms of assembly, tetramer of two alpha and two beta subunits.

The protein localises to the cytoplasm. It carries out the reaction tRNA(Gly) + glycine + ATP = glycyl-tRNA(Gly) + AMP + diphosphate. In Haemophilus influenzae (strain PittGG), this protein is Glycine--tRNA ligase alpha subunit.